We begin with the raw amino-acid sequence, 94 residues long: Preprofallaxidin-9 (94 aa).

The signal sequence occupies residues 1-22; sequence MASLKKSLFLVLFLGLVSLSIC. Positions 23–46 are excised as a propeptide; that stretch reads EEEKRENEEDAEDENHEEESEEKR. The tract at residues 27 to 46 is disordered; it reads RENEEDAEDENHEEESEEKR. Residues 30 to 42 show a composition bias toward acidic residues; the sequence is EEDAEDENHEEES. Leucine amide is present on Leu-62. Positions 66–70 are excised as a propeptide; that stretch reads SEEKR. Met-75 is subject to Methionine amide. Positions 79-83 are excised as a propeptide; the sequence is SEEKR. Met-88 bears the Methionine amide mark. Positions 92–94 are excised as a propeptide; sequence SEE.

This sequence belongs to the frog skin active peptide (FSAP) family. Brevinin subfamily. Expressed by the skin glands.

It localises to the secreted. Fallaxidin-1.3 shows no antibacterial activity against Gram-positive or Gram-negative bacteria. Does not inhibit the formation of NO by neuronal nitric oxide synthase. Has no effect on splenocyte proliferation or smooth muscle contraction. In terms of biological role, fallaxidin-3.2 shows antibacterial activity against the Gram-positive bacteria E.faecalis (MIC=100 uM) and L.lactis (MIC=500 uM). No antibacterial activity against the Gram-positive bacteria B.cereus, L.innocua, M.luteus, S.epidermidis, S.uberis and S.aureus, or the Gram-negative bacteria E.cloacae and E.coli. This is Preprofallaxidin-9 from Litoria fallax (Eastern dwarf tree frog).